Reading from the N-terminus, the 3420-residue chain is Adhesin BmaC autotransporter (3420 aa).

An N-terminal signal peptide occupies residues 1–72; sequence MPNLANQDFT…SLVMAGTAAA (72 aa). One can recognise an Autotransporter domain in the interval 3138-3420; it reads GPSGNNGIWA…AGSVGLRVRW (283 aa).

It is found in the cell surface. Its subcellular location is the cell outer membrane. Fibronectin-binding protein, which is involved in adhesion to host cells and in the infective process. Mediates the binding of B.suis to the extracellular matrix and to non-phagocytic cells via cell-associated fibronectin. This Brucella suis biovar 1 (strain 1330) protein is Adhesin BmaC autotransporter.